Consider the following 423-residue polypeptide: MAATTTRPLPLLLLLLLPPLLLLLLSFHAAAAAAAEEFPRDGRVIELDESSFEAALGAIDYLFVDFYAPWCGHCKRLAPELDEAAPVLAGLSEPIIVAKVNADKYRKLGSKYGVDGFPTLMLFIHGVPIEYTGSRKADLLVRNLNKFVAPDVSILESDSAIKSFVENAGTSFPMFIGFGVNESLIAGYGGKYKKRAWFAVAKDFSEDFMVTYDFDKVPALVSLHPKYKEQSVFYGPFEGSFLEDFIRQSLLPLTVPINTETLKMLDDDDRKVVLAILEDDSDETSSQLVKVLRSAANANRDLVFGYVGIKQWDEFVETFDISKSSQLPKLIVWDRNEEYEVVEGSEKLEEGDQASQISQFLEGYRAGRTTKKKVSGPSFMGFLNSLVSLNSLYILICVFALLGVMIYFTGQDDTPQVRRAHEE.

An N-terminal signal peptide occupies residues 1-35 (MAATTTRPLPLLLLLLLPPLLLLLLSFHAAAAAAA). The 114-residue stretch at 36-149 (EEFPRDGRVI…LVRNLNKFVA (114 aa)) folds into the Thioredoxin domain. Active-site nucleophile residues include Cys71 and Cys74. Residues Cys71 and Cys74 are joined by a disulfide bond. Asn181 is a glycosylation site (N-linked (GlcNAc...) asparagine). Residues 386 to 406 (LVSLNSLYILICVFALLGVMI) traverse the membrane as a helical segment.

Belongs to the protein disulfide isomerase family.

It is found in the membrane. Acts as a protein-folding catalyst that interacts with nascent polypeptides to catalyze the formation, isomerization, and reduction or oxidation of disulfide bonds. May play a role in storage protein biogenesis. This Oryza sativa subsp. japonica (Rice) protein is Protein disulfide isomerase-like 5-2 (PDIL5-2).